The following is a 199-amino-acid chain: Recombination protein RecR (199 aa).

A C4-type zinc finger spans residues 57-72 (CQSCRTYTEETLCPIC). In terms of domain architecture, Toprim spans 81-176 (STICVVETPA…MISRIAHGVP (96 aa)).

Belongs to the RecR family.

Its function is as follows. May play a role in DNA repair. It seems to be involved in an RecBC-independent recombinational process of DNA repair. It may act with RecF and RecO. In Shewanella baltica (strain OS195), this protein is Recombination protein RecR.